The primary structure comprises 725 residues: MFKVFGFGAKEEIPELSQEEKTKAILKQAHDFEQALRAMDYVLDDNADEGLALLDESDAKEASDQTINALARGVIEFLEATLGFEAEEMKKASATLAKAEALSLKSRERAQKIGLKSSSLYPPGTVYAVTYTESCLLHALLMIFSESMMEAAKAILKLRKSYYMLQEILETIKAANKAKKLKITSGSEDKESTPATFITGGDAFNSVDIPYELTPEEQKDKDLLQFAEQIHSMRTKRLSGAHIGNSPAINRLRGELGLQAMEDLPEEEITDHKVLSDDIDLSQATIDEFVHSGVNLCFGILQVVISLLPPAIGAVLSVVGFRGSREEGLRLVWKATKQRNVHGCIGLLALMFYYDGPFQFTDDDFDIPAAVKDSSNSEDSEDEEMDGPTLLHPGKILEDALLQSRALFPNSALWLLNEARMLSGKGRLEEAVALMDSIDVSKIRMRQVKSLMIFDRAITLIHLHQYDRAAEDILSLLDISDWSHAFYTYFAGCCYLENWRMCEMGLMKSDKKDEYQKKAEELIFTSVNLLGKKTFKSKNLPLDRFILRKVEQFKAKKEELGVENPLDGIATSPVHEISYFYNGYNRMSEEHLELTKKMLTEYRNPAIEALDSDQELIKDLLVSLTLRRLGHIQEGCDILDEKVLPKFFSIQNGKVKYIKKTEDPWAYPTALYERALFTWKLEGMDGLPESKEWLLRAQGYADDYELSTRVGMKIKAAIDRVDHSL.

The residue at position 196 (threonine 196) is a Phosphothreonine. A phosphoserine mark is found at serine 246, serine 377, and serine 380.

This sequence belongs to the IML2 family.

The protein resides in the cytoplasm. Its subcellular location is the nucleus. In terms of biological role, may be involved in mitochondrial DNA stability. The protein is IML2-like protein SCY_3392 of Saccharomyces cerevisiae (strain YJM789) (Baker's yeast).